Consider the following 627-residue polypeptide: Coiled-coil domain-containing protein 22 (627 aa).

Residues 1-321 (MEEADRILIH…VSDVPATSRR (321 aa)) form a sufficient for interaction with COMMD1 region. A sufficicient and required for interaction with CCDC93 region spans residues 1–447 (MEEADRILIH…LQDCRELESS (447 aa)). The tract at residues 218-243 (TGRDRPGDEDWVHRTSRLPPQEDTRA) is disordered. Residues 219-230 (GRDRPGDEDWVH) show a composition bias toward basic and acidic residues. A coiled-coil region spans residues 320–627 (RRPEQVTWAA…AGLLGRVREA (308 aa)). Residue Ser-410 is modified to Phosphoserine.

Belongs to the CCDC22 family. Component of the commander complex consisting of the CCC subcomplex and the retriever subcomplex. Component of the CCC (COMMD/CCDC22/CCDC93) subcomplex consisting of COMMD1, COMMD2, COMMD3, COMMD4, COMMD5, COMMD6, COMMD7, COMMD8, COMMD9, COMMD10, CCDC22 and CCDC93. Forms a coiled-coil heterodimer with CCDC22; this heterodimer interacts with the guanine nucleotide exchange factor DENND10; the interaction is direct. Interacts with CUL1, CUL2, CUL3, SKP1, BTRC. Interacts with SNX17 and SNX31. Interacts with CPNE1 and CPNE4. In terms of tissue distribution, widely expressed in adult tissues and in fetal liver and brain, with highest levels in prostate and lowest in skeletal muscle.

It localises to the endosome. The protein localises to the cytoplasm. The protein resides in the cytoskeleton. Its subcellular location is the microtubule organizing center. It is found in the centrosome. Functionally, component of the commander complex that is essential for endosomal recycling of transmembrane cargos; the Commander complex is composed of composed of the CCC subcomplex and the retriever subcomplex. Component of the CCC complex, which is involved in the regulation of endosomal recycling of surface proteins, including integrins, signaling receptor and channels. Involved in regulation of NF-kappa-B signaling. Promotes ubiquitination of I-kappa-B-kinase subunit IKBKB and its subsequent proteasomal degradation leading to NF-kappa-B activation; the function may involve association with COMMD8 and a CUL1-dependent E3 ubiquitin ligase complex. May down-regulate NF-kappa-B activity via association with COMMD1 and involving a CUL2-dependent E3 ubiquitin ligase complex. Regulates the cellular localization of COMM domain-containing proteins, such as COMMD1 and COMMD10. Component of the CCC complex, which is involved in the regulation of endosomal recycling of surface proteins, including integrins, signaling receptor and channels. The CCC complex associates with SNX17, retriever and WASH complexes to prevent lysosomal degradation and promote cell surface recycling of numerous cargos such as integrins ITGA5:ITGB1. Plays a role in copper ion homeostasis. Involved in copper-dependent ATP7A trafficking between the trans-Golgi network and vesicles in the cell periphery; the function is proposed to depend on its association within the CCC complex and cooperation with the WASH complex on early endosomes. Its function is as follows. (Microbial infection) The CCC complex, in collaboration with the heterotrimeric retriever complex, mediates the exit of human papillomavirus to the cell surface. The chain is Coiled-coil domain-containing protein 22 (CCDC22) from Homo sapiens (Human).